Consider the following 234-residue polypeptide: Transcription factor UDT1 (234 aa).

Residues 1–51 (MPRRARARGGGGGGGEEVKVEDDFIDSVLNFGGGGGGEEDGDDGEEEQQQQ) form a disordered region. Positions 37–48 (GEEDGDDGEEEQ) are enriched in acidic residues. Residues 61 to 74 (EFKSKNLEAERRRR) are basic motif; degenerate. A bHLH domain is found at 61-110 (EFKSKNLEAERRRRGRLNGNIFALRAVVPKITKMSKEATLSDAIEHIKNL). The interval 75 to 110 (GRLNGNIFALRAVVPKITKMSKEATLSDAIEHIKNL) is helix-loop-helix motif.

It belongs to the bHLH protein family.

It is found in the nucleus. Its function is as follows. Transcription factor that plays a crucial role in tapetum development. Required for male fertility and pollen differentiation within the developing anther. Plays a major role in maintaining tapetum development, starting in early meiosis. Required for pollen mother cell meiosis. May regulate the anther-specific cysteine protease CP1 and lipid-transfer proteins C4 and C6. Required for anther development. Functions in parallel with GAMYB to regulate early anther development. Functions upstream of the transcription factor TDR and may positively regulate its transcription. This chain is Transcription factor UDT1, found in Oryza sativa subsp. japonica (Rice).